We begin with the raw amino-acid sequence, 468 residues long: Sorting and assembly machinery component 50 homolog A (468 aa).

Residues 1 to 24 (MGTVHARSLDPLPMNGPDFGSPDD) are disordered. The 81-residue stretch at 44-124 (VVVQRVHFEG…LDVTFEVTEL (81 aa)) folds into the POTRA domain.

Belongs to the SAM50/omp85 family. In terms of assembly, associates with the mitochondrial contact site and cristae organizing system (MICOS) complex (also known as MINOS or MitOS complex).

Its subcellular location is the mitochondrion outer membrane. Its function is as follows. May play a role in the maintenance of the structure of mitochondrial cristae. The sequence is that of Sorting and assembly machinery component 50 homolog A (samm50-a) from Xenopus laevis (African clawed frog).